Here is a 1081-residue protein sequence, read N- to C-terminus: WD repeat-containing protein 64 (1081 aa).

WD repeat units follow at residues aspartate 102–lysine 152, glycine 153–glutamine 198, glutamate 199–serine 265, lysine 266–asparagine 314, leucine 315–threonine 356, lysine 357–leucine 400, leucine 401–isoleucine 444, glutamine 445–leucine 488, glutamine 489–glycine 532, glutamine 533–glutamate 631, arginine 632–serine 740, lysine 741–leucine 803, leucine 804–phenylalanine 857, and lysine 858–histidine 895. Residues cysteine 726–glutamine 745 are compositionally biased toward low complexity. Residues cysteine 726–threonine 757 form a disordered region. The segment covering serine 746–glutamine 756 has biased composition (basic and acidic residues). The tract at residues aspartate 1036–serine 1060 is disordered. Positions glycine 1043–serine 1060 are enriched in basic residues.

This Homo sapiens (Human) protein is WD repeat-containing protein 64 (WDR64).